Reading from the N-terminus, the 162-residue chain is Large ribosomal subunit protein uL30 (162 aa).

Belongs to the universal ribosomal protein uL30 family. As to quaternary structure, part of the 50S ribosomal subunit.

The polypeptide is Large ribosomal subunit protein uL30 (Desulfurococcus amylolyticus (strain DSM 18924 / JCM 16383 / VKM B-2413 / 1221n) (Desulfurococcus kamchatkensis)).